The primary structure comprises 287 residues: Eukaryotic translation initiation factor 3 subunit F (287 aa).

One can recognise an MPN domain in the interval 12-142 (VRVHPVVLFQ…IKAYVCVSLG (131 aa)).

The protein belongs to the eIF-3 subunit F family. In terms of assembly, component of the eukaryotic translation initiation factor 3 (eIF-3) complex.

It localises to the cytoplasm. Its function is as follows. Component of the eukaryotic translation initiation factor 3 (eIF-3) complex, which is involved in protein synthesis of a specialized repertoire of mRNAs and, together with other initiation factors, stimulates binding of mRNA and methionyl-tRNAi to the 40S ribosome. The eIF-3 complex specifically targets and initiates translation of a subset of mRNAs involved in cell proliferation. The chain is Eukaryotic translation initiation factor 3 subunit F from Culex quinquefasciatus (Southern house mosquito).